Here is a 512-residue protein sequence, read N- to C-terminus: tRNA-2-methylthio-N(6)-dimethylallyladenosine synthase (512 aa).

A disordered region spans residues 1-20 (MLQQADGVSPDRSSCDTPAP). Residues 21-137 (RTFEVRTYGC…LPTLLDRARH (117 aa)) form the MTTase N-terminal domain. Positions 30, 66, 100, 174, 178, and 181 each coordinate [4Fe-4S] cluster. The region spanning 160-397 (RESAYAAWVS…ELQERISWEE (238 aa)) is the Radical SAM core domain. The TRAM domain occupies 399–469 (RAQIGREVEL…PHHLIADAGP (71 aa)). The span at 470 to 486 (AEHRRTRAGDAHAEGRT) shows a compositional bias: basic and acidic residues. The disordered stretch occupies residues 470 to 512 (AEHRRTRAGDAHAEGRTPKTGVGLGMPGIGAPEPAPVTQGCAL).

The protein belongs to the methylthiotransferase family. MiaB subfamily. In terms of assembly, monomer. [4Fe-4S] cluster serves as cofactor.

The protein localises to the cytoplasm. It catalyses the reaction N(6)-dimethylallyladenosine(37) in tRNA + (sulfur carrier)-SH + AH2 + 2 S-adenosyl-L-methionine = 2-methylsulfanyl-N(6)-dimethylallyladenosine(37) in tRNA + (sulfur carrier)-H + 5'-deoxyadenosine + L-methionine + A + S-adenosyl-L-homocysteine + 2 H(+). Its function is as follows. Catalyzes the methylthiolation of N6-(dimethylallyl)adenosine (i(6)A), leading to the formation of 2-methylthio-N6-(dimethylallyl)adenosine (ms(2)i(6)A) at position 37 in tRNAs that read codons beginning with uridine. This is tRNA-2-methylthio-N(6)-dimethylallyladenosine synthase from Mycolicibacterium gilvum (strain PYR-GCK) (Mycobacterium gilvum (strain PYR-GCK)).